Reading from the N-terminus, the 164-residue chain is CB1 cannabinoid receptor-interacting protein 1 (164 aa).

The protein belongs to the CNRIP family. Interacts with the cannabinoid receptor CNR1 (via C-terminus). Does not interact with cannabinoid receptor CNR2.

Suppresses cannabinoid receptor CNR1-mediated tonic inhibition of voltage-gated calcium channels. This chain is CB1 cannabinoid receptor-interacting protein 1 (CNRIP1), found in Bos taurus (Bovine).